The following is a 348-amino-acid chain: WW domain binding protein 1-like (348 aa).

Residues 42–62 (LWWFWLVWTVVIILSCCCVCH) traverse the membrane as a helical segment. Disordered stretches follow at residues 111 to 253 (VVNR…RRFT) and 306 to 348 (CLSS…GSPS). A compositionally biased stretch (pro residues) spans 134–155 (LPPPPQGGPPGGSPPGADPPPQ). Over residues 156–177 (GSQGAQSSPLSGPSRSSTRPPS) the composition is skewed to low complexity. Residue Ser-177 is modified to Phosphoserine. The segment covering 220–234 (SECKEELLKDSRSER) has biased composition (basic and acidic residues). The span at 331–348 (NTINEQDSPNSQHSGSPS) shows a compositional bias: polar residues.

The protein localises to the membrane. This chain is WW domain binding protein 1-like (Wbp1l), found in Mus musculus (Mouse).